Here is a 397-residue protein sequence, read N- to C-terminus: MTTSIYLVKGREKSLRRRHPWVFSRGIDRIEGNKPSMGETVEVYDNKGEWLARGAYSPQSQIRIRVWTFDKKEVINVDFFVKRLKAAQALRDVLAARDGLTGYRLIAAESDGLPGITIDRYQNFLVCQLLSAGAEEQKDALVEALNICYPECSVYERSDVAVRKKEGLKQRTGVLSGEEPPKFVTIEENGIKINVDIVGGHKTGFYLDQRDSRQAAVKYVNGKRVLNCFCYTGGFGLYALKGGASQVVNVDVSQPALDTARLNTEANGLPVENAEFVNADVFKLLREYRERGEFFDVVIMDPPKFAESKSQLVGACRGYKDINMLAMQILNPGGILLTYSCSGLMDNGLFQKIVADAALDAHREVQFIERFGQAADHPLDSAYPEGFYLKGFACYVK.

One can recognise a PUA domain in the interval 2 to 82; sequence TTSIYLVKGR…EVINVDFFVK (81 aa).

This sequence belongs to the methyltransferase superfamily. RlmI family.

Its subcellular location is the cytoplasm. It catalyses the reaction cytidine(1962) in 23S rRNA + S-adenosyl-L-methionine = 5-methylcytidine(1962) in 23S rRNA + S-adenosyl-L-homocysteine + H(+). Functionally, specifically methylates the cytosine at position 1962 (m5C1962) of 23S rRNA. The sequence is that of Ribosomal RNA large subunit methyltransferase I from Photobacterium profundum (strain SS9).